The chain runs to 843 residues: Glycogen phosphorylase, brain form (843 aa).

Position 2 is an N-acetylalanine (alanine 2). At serine 15 the chain carries Phosphoserine; by PHK; in form phosphorylase A. 3 residues coordinate AMP: aspartate 43, tyrosine 197, and arginine 310. The residue at position 197 (tyrosine 197) is a Phosphotyrosine. Residue tyrosine 473 is modified to Phosphotyrosine. Lysine 569 is a pyridoxal 5'-phosphate binding site. Positions 677–678 are pyridoxal 5'-phosphate; the sequence is TG. Lysine 681 carries the N6-(pyridoxal phosphate)lysine modification.

The protein belongs to the glycogen phosphorylase family. Homodimer. Dimers associate into a tetramer to form the enzymatically active phosphorylase A. Requires pyridoxal 5'-phosphate as cofactor. In terms of processing, phosphorylation of Ser-15 converts phosphorylase B (unphosphorylated) to phosphorylase A.

It catalyses the reaction [(1-&gt;4)-alpha-D-glucosyl](n) + phosphate = [(1-&gt;4)-alpha-D-glucosyl](n-1) + alpha-D-glucose 1-phosphate. Activity of phosphorylase is controlled both by allosteric means (through the non-covalent binding of metabolites) and by covalent modification. Thus AMP allosterically activates, whereas ATP, ADP, and glucose-6-phosphate allosterically inhibit, phosphorylase B. Glycogen phosphorylase that regulates glycogen mobilization. Phosphorylase is an important allosteric enzyme in carbohydrate metabolism. Enzymes from different sources differ in their regulatory mechanisms and in their natural substrates. However, all known phosphorylases share catalytic and structural properties. The polypeptide is Glycogen phosphorylase, brain form (PYGB) (Bos taurus (Bovine)).